A 127-amino-acid polypeptide reads, in one-letter code: Glycine cleavage system H protein (127 aa).

The Lipoyl-binding domain maps to 22-104; that stretch reads NVRIGITDYA…YDKAWMIVVK (83 aa). Lys-63 is modified (N6-lipoyllysine).

It belongs to the GcvH family. The glycine cleavage system is composed of four proteins: P, T, L and H. Requires (R)-lipoate as cofactor.

Functionally, the glycine cleavage system catalyzes the degradation of glycine. The H protein shuttles the methylamine group of glycine from the P protein to the T protein. In terms of biological role, is also involved in protein lipoylation via its role as an octanoyl/lipoyl carrier protein intermediate. In Geobacillus kaustophilus (strain HTA426), this protein is Glycine cleavage system H protein.